We begin with the raw amino-acid sequence, 127 residues long: Large ribosomal subunit protein bL19 (127 aa).

The protein belongs to the bacterial ribosomal protein bL19 family.

In terms of biological role, this protein is located at the 30S-50S ribosomal subunit interface and may play a role in the structure and function of the aminoacyl-tRNA binding site. This chain is Large ribosomal subunit protein bL19, found in Synechococcus sp. (strain JA-3-3Ab) (Cyanobacteria bacterium Yellowstone A-Prime).